Consider the following 246-residue polypeptide: Exosome complex component Rrp41 (246 aa).

Belongs to the RNase PH family. Rrp41 subfamily. In terms of assembly, component of the archaeal exosome complex. Forms a hexameric ring-like arrangement composed of 3 Rrp41-Rrp42 heterodimers. The hexameric ring associates with a trimer of Rrp4 and/or Csl4 subunits.

It is found in the cytoplasm. In terms of biological role, catalytic component of the exosome, which is a complex involved in RNA degradation. Has 3'-&gt;5' exoribonuclease activity. Can also synthesize heteromeric RNA-tails. This Pyrobaculum aerophilum (strain ATCC 51768 / DSM 7523 / JCM 9630 / CIP 104966 / NBRC 100827 / IM2) protein is Exosome complex component Rrp41.